The sequence spans 521 residues: Serine/threonine-protein kinase A (521 aa).

In terms of domain architecture, Protein kinase spans 15 to 289 (YQLVELVGSG…DVIIRAIDAI (275 aa)). ATP contacts are provided by residues 21–29 (VGSGAMGQV) and lysine 45. Catalysis depends on aspartate 148, which acts as the Proton acceptor.

It belongs to the protein kinase superfamily. Ser/Thr protein kinase family. Autophosphorylated.

The catalysed reaction is L-seryl-[protein] + ATP = O-phospho-L-seryl-[protein] + ADP + H(+). It catalyses the reaction L-threonyl-[protein] + ATP = O-phospho-L-threonyl-[protein] + ADP + H(+). Its function is as follows. Protein kinase that regulates cellular motility via phosphorylation of membrane proteins. This is Serine/threonine-protein kinase A (spkA) from Synechocystis sp. (strain ATCC 27184 / PCC 6803 / Kazusa).